The following is a 479-amino-acid chain: Solute carrier family 46 member 2 (479 aa).

At 1–23 (MGPGGTCPWSSRLSGFRVRTWIE) the chain is on the cytoplasmic side. A helical transmembrane segment spans residues 24-44 (PVVASTQVAGSLYDAGLLLVV). Topologically, residues 45-80 (KESFKSEAGGSSNYSANQSLVEYQEDQQQKAISNFN) are extracellular. N57 and N61 each carry an N-linked (GlcNAc...) asparagine glycan. The helical transmembrane segment at 81 to 101 (IIYNLVLGLTPLLSAYGLGWL) threads the bilayer. Residues 102–110 (SDRYHRKIS) are Cytoplasmic-facing. A helical transmembrane segment spans residues 111-131 (ICTAMLGFLLSRIGLLLKVML). The Extracellular portion of the chain corresponds to 132–140 (DWPVEVMYG). Residues 141 to 161 (AAALNGLCGSFSAYWSGVMAL) traverse the membrane as a helical segment. Residues 162-174 (GSLGCSEGRRSVR) lie on the Cytoplasmic side of the membrane. The helical transmembrane segment at 175-195 (LILIDLVLGLAGFSGSMASGH) threads the bilayer. Topologically, residues 196–207 (LFKQIVGHSAQG) are extracellular. The helical transmembrane segment at 208-228 (LLLTACSVGCAAFALFYSLFV) threads the bilayer. The Cytoplasmic portion of the chain corresponds to 229–281 (LKVPESKPNKVHPTVDTVSGMMGTYRTLDPDQQDKQNVPRNPRTPGKGKSSQR). The tract at residues 255–277 (TLDPDQQDKQNVPRNPRTPGKGK) is disordered. A helical transmembrane segment spans residues 282–302 (EVVALLFVGAIIYDLAAVGTV). Over 303–321 (DVMALFVLKEPLHWNQVQL) the chain is Extracellular. The chain crosses the membrane as a helical span at residues 322 to 342 (GYGMASGYIIFITSFLGVLVF). Topologically, residues 343-348 (SRCFRD) are cytoplasmic. A helical membrane pass occupies residues 349-369 (TTMIIIGMLSFGSGALLLAFV). The Extracellular portion of the chain corresponds to 370–371 (KE). The chain crosses the membrane as a helical span at residues 372-392 (TYMFYIARAIMLFALIPITTI). Residues 393 to 407 (RSAMSKLIKDSSYGK) lie on the Cytoplasmic side of the membrane. The helical transmembrane segment at 408-428 (IFVILQLCLTLTGVVTSTIYN) threads the bilayer. Over 429–441 (KIYQLTLDKFIGT) the chain is Extracellular. The helical transmembrane segment at 442–462 (CFVLSSFLSFLAIVPIGVVAY) threads the bilayer. At 463–479 (KQVPRSQQGECAEKQRS) the chain is on the cytoplasmic side.

It belongs to the major facilitator superfamily. SLC46A family. Post-translationally, glycosylated. As to expression, expressed on cortical epithelial cells in the thymus. Mainly expressed in the thymic cortex and is highly enriched in SCID thymus. Also expressed in lymph nodes, heart, fetal liver, brain, spleen, intestine and kidney, but not in adult liver, skin, skeletal muscle and lung. Expressed in skin epidermis.

It is found in the endosome membrane. The protein localises to the cell membrane. It carries out the reaction N-acetyl-beta-D-glucosaminyl-(1-&gt;4)-1,6-anhydro-N-acetyl-beta-D-muramoyl-L-alanyl-gamma-D-glutamyl-meso-2,6-diaminopimeloyl-D-alanine(out) + n H(+)(out) = N-acetyl-beta-D-glucosaminyl-(1-&gt;4)-1,6-anhydro-N-acetyl-beta-D-muramoyl-L-alanyl-gamma-D-glutamyl-meso-2,6-diaminopimeloyl-D-alanine(in) + n H(+)(in). The catalysed reaction is L-alanyl-gamma-D-glutamyl-meso-2,6-diaminopimelate(out) + n H(+)(out) = L-alanyl-gamma-D-glutamyl-meso-2,6-diaminopimelate(in) + n H(+)(in). It catalyses the reaction N-acetyl-D-muramoyl-L-alanyl-D-isoglutamine(out) + n H(+)(out) = N-acetyl-D-muramoyl-L-alanyl-D-isoglutamine(in) + n H(+)(in). The enzyme catalyses 2',3'-cGAMP(out) + n H(+)(out) = 2',3'-cGAMP(in) + n H(+)(in). It carries out the reaction 3',3'-cGAMP(out) + n H(+)(out) = 3',3'-cGAMP(in) + n H(+)(in). Down-regulated by the anti-inflammatory drug methotrexate. Its function is as follows. Proton-coupled transporter that delivers pathogen-associated or danger-associated molecular patterns to cytosolic pattern recognition receptors as part of the innate immune response to microbes or tissue injury. Has selectivity toward muropeptides that contain the amino acid diaminopimelic acid (DAP-type peptidoglycan muropeptides) including Tri-DAP and tracheal toxin (TCT), common in Gram-negative bacteria and Gram-positive bacilli. In the context of immune recognition of skin microbiota, shuttles bacterial muropeptides across the endolysosomal membranes into the cytosol for recognition by NOD1, triggering MYD88-dependent secretion of IL1A and neutrophil recruitment in a pyroptosis-type inflammatory process. To a lesser extent and redundantly, transports muramyl dipeptides derived from most bacterial proteoglycans, eliciting NOD2 receptor activation and downstream inflammatory responses. Postulated to function as an importer of cyclic GMP-AMP dinucleotides (cGAMPs) in monocyte and macrophage cell lineages. Selectively imports cGAMPs derived from pathogenic bacteria such as 3'3'-cGAMP thus providing for differential immune recognition of pathogenic versus commensal bacteria. During tumorigenesis may transport extracellular tumor-derived 2'3'-cGAMP across the plasma membrane of M1-polarized macrophages to activate the anti-tumoral stimulator of interferon genes (STING) pathway. The transport mechanism, its electrogenicity and stoichiometry remain to be elucidated. This chain is Solute carrier family 46 member 2, found in Mus musculus (Mouse).